Here is an 836-residue protein sequence, read N- to C-terminus: Protein-glutamine gamma-glutamyltransferase K (836 aa).

The span at 1–33 (MDGPRSDMGRSDVSRSDMSRSDMGRSDMGRSDV) shows a compositional bias: basic and acidic residues. 2 disordered regions span residues 1 to 68 (MDGP…SRGG) and 89 to 125 (DDWG…DGTI). The residue at position 46 (Thr46) is a Phosphothreonine. A phosphoserine mark is found at Ser48, Ser98, and Ser112. Residues 89 to 112 (DDWGREPSDSRDRGSSSRGGRPDS) are compositionally biased toward basic and acidic residues. Catalysis depends on residues Cys397, His456, and Asp479. 4 residues coordinate Ca(2+): Asn519, Asp521, Glu568, and Glu573. Position 824 is a phosphoserine (Ser824).

This sequence belongs to the transglutaminase superfamily. Transglutaminase family. As to quaternary structure, interacts with PLAAT4. Requires Ca(2+) as cofactor. In terms of processing, palmitoylated. Post-translationally, the membrane anchorage region possesses a cluster of five cysteines within which fatty acid(s) may become thioester-linked. It is subject to phorbol ester-stimulated phosphorylation and is hypersensitive to proteolysis, which releases the enzyme in a soluble form. Tyrosine-phosphorylated.

Its subcellular location is the membrane. The catalysed reaction is L-glutaminyl-[protein] + L-lysyl-[protein] = [protein]-L-lysyl-N(6)-5-L-glutamyl-[protein] + NH4(+). Inhibited by retinoic acid, but phorbol ester treatment activates it. Catalyzes the cross-linking of proteins and the conjugation of polyamines to proteins. Responsible for cross-linking epidermal proteins during formation of the stratum corneum. Involved in cell proliferation. The protein is Protein-glutamine gamma-glutamyltransferase K (TGM1) of Oryctolagus cuniculus (Rabbit).